We begin with the raw amino-acid sequence, 404 residues long: Putative aspartate aminotransferase, cytoplasmic 2 (404 aa).

Lys-249 carries the N6-(pyridoxal phosphate)lysine modification.

Belongs to the class-I pyridoxal-phosphate-dependent aminotransferase family. Homodimer. Pyridoxal 5'-phosphate is required as a cofactor.

Its subcellular location is the cytoplasm. The catalysed reaction is L-aspartate + 2-oxoglutarate = oxaloacetate + L-glutamate. The polypeptide is Putative aspartate aminotransferase, cytoplasmic 2 (Got1l1) (Mus musculus (Mouse)).